A 610-amino-acid chain; its full sequence is Aspercryptin biosynthesis cluster-specific transcription regulator atnN (610 aa).

Polar residues predominate over residues 1 to 26; it reads MAPKDSQVSASNEMTGNPPSSVQGRS. A disordered region spans residues 1-27; the sequence is MAPKDSQVSASNEMTGNPPSSVQGRSR. Positions 30 to 57 form a DNA-binding region, zn(2)-C6 fungal-type; the sequence is CITCRIRRVKCDEERPHCRRCQSTGRKC. Disordered stretches follow at residues 61–81 and 427–493; these read TPLT…KAGS and AGST…LPRP. 2 stretches are compositionally biased toward low complexity: residues 66 to 79 and 437 to 474; these read QQPK…AAKA and SRAG…TPTP.

The protein localises to the nucleus. In terms of biological role, transcription factor that positively regulates the cluster that mediate the production of aspercryptins, linear lipopeptides built from six amino acids including 2 highly unusual and nonproteogenic amino acids, 2-amino-octanoic acid (2aoa) and 2-amino-dodecanol (2adol). The protein is Aspercryptin biosynthesis cluster-specific transcription regulator atnN of Emericella nidulans (strain FGSC A4 / ATCC 38163 / CBS 112.46 / NRRL 194 / M139) (Aspergillus nidulans).